The primary structure comprises 254 residues: 5'-methylthioadenosine/S-adenosylhomocysteine nucleosidase (254 aa).

At M1 the chain carries N-acetylmethionine. Residue E25 is the Proton acceptor of the active site. S-methyl-5'-thioadenosine contacts are provided by residues T103 and 186–189; that span reads KDME. Positions 186 and 212 each coordinate adenine. The active-site Proton donor is the D212.

The protein belongs to the PNP/UDP phosphorylase family. MtnN subfamily. As to quaternary structure, homodimer.

The catalysed reaction is S-methyl-5'-thioadenosine + H2O = 5-(methylsulfanyl)-D-ribose + adenine. It catalyses the reaction S-adenosyl-L-homocysteine + H2O = S-(5-deoxy-D-ribos-5-yl)-L-homocysteine + adenine. The enzyme catalyses 5'-deoxyadenosine + H2O = 5-deoxy-D-ribose + adenine. It participates in amino-acid biosynthesis; L-methionine biosynthesis via salvage pathway; S-methyl-5-thio-alpha-D-ribose 1-phosphate from S-methyl-5'-thioadenosine (hydrolase route): step 1/2. Its function is as follows. Enzyme of the methionine cycle that catalyzes the irreversible cleavage of the glycosidic bond in 5'-methylthioadenosine (MTA) and S-adenosylhomocysteine (SAH/AdoHcy) to a lesser extent, to adenine and the corresponding thioribose, 5'-methylthioribose and S-ribosylhomocysteine, respectively. Contributes to the maintenance of AdoMet homeostasis and is required to sustain high rates of ethylene synthesis. The chain is 5'-methylthioadenosine/S-adenosylhomocysteine nucleosidase (MTN2) from Arabidopsis thaliana (Mouse-ear cress).